Here is a 274-residue protein sequence, read N- to C-terminus: tRNA-cytidine(32) 2-sulfurtransferase (274 aa).

Positions 40–45 (SGGKDS) match the PP-loop motif motif. [4Fe-4S] cluster is bound by residues Cys-115, Cys-118, and Cys-206.

It belongs to the TtcA family. Homodimer. Mg(2+) serves as cofactor. It depends on [4Fe-4S] cluster as a cofactor.

It localises to the cytoplasm. It catalyses the reaction cytidine(32) in tRNA + S-sulfanyl-L-cysteinyl-[cysteine desulfurase] + AH2 + ATP = 2-thiocytidine(32) in tRNA + L-cysteinyl-[cysteine desulfurase] + A + AMP + diphosphate + H(+). The protein operates within tRNA modification. Its function is as follows. Catalyzes the ATP-dependent 2-thiolation of cytidine in position 32 of tRNA, to form 2-thiocytidine (s(2)C32). The sulfur atoms are provided by the cysteine/cysteine desulfurase (IscS) system. The sequence is that of tRNA-cytidine(32) 2-sulfurtransferase from Azotobacter vinelandii (strain DJ / ATCC BAA-1303).